Here is a 286-residue protein sequence, read N- to C-terminus: Energy-coupling factor transporter ATP-binding protein EcfA2 (286 aa).

The ABC transporter domain maps to 3–245; sequence IKIENLTYTY…IDTLEKVGLA (243 aa). 40 to 47 is an ATP binding site; it reads GHTGSGKS.

It belongs to the ABC transporter superfamily. Energy-coupling factor EcfA family. Forms a stable energy-coupling factor (ECF) transporter complex composed of 2 membrane-embedded substrate-binding proteins (S component), 2 ATP-binding proteins (A component) and 2 transmembrane proteins (T component).

It is found in the cell membrane. Functionally, ATP-binding (A) component of a common energy-coupling factor (ECF) ABC-transporter complex. Unlike classic ABC transporters this ECF transporter provides the energy necessary to transport a number of different substrates. The chain is Energy-coupling factor transporter ATP-binding protein EcfA2 from Clostridium acetobutylicum (strain ATCC 824 / DSM 792 / JCM 1419 / IAM 19013 / LMG 5710 / NBRC 13948 / NRRL B-527 / VKM B-1787 / 2291 / W).